We begin with the raw amino-acid sequence, 421 residues long: Histidine--tRNA ligase (421 aa).

Belongs to the class-II aminoacyl-tRNA synthetase family. Homodimer.

It is found in the cytoplasm. The catalysed reaction is tRNA(His) + L-histidine + ATP = L-histidyl-tRNA(His) + AMP + diphosphate + H(+). The protein is Histidine--tRNA ligase of Coxiella burnetii (strain Dugway 5J108-111).